The following is a 567-amino-acid chain: NAC domain-containing protein 78 (567 aa).

Residues 9-159 (LAPGFRFHPT…AYVLCRIFQK (151 aa)) form the NAC domain. The DNA-binding element occupies 108–165 (VGMKKTLVYHKGRAPRGERTNWVMHEYRLSDEDLKKAGVPQEAYVLCRIFQKSGTGPK). The disordered stretch occupies residues 393-436 (NQEALDQKPAPKELEKEVAGGKEAVEEKESGEGSSSKQDTDFKD). Basic and acidic residues predominate over residues 397–423 (LDQKPAPKELEKEVAGGKEAVEEKESG). Residues 544–564 (LVFMCLWVLLLSVSFKIVTMV) form a helical membrane-spanning segment.

Expressed in root meristem. Expressed in roots, rosette leaves, cauline leaves, shoot apex, stems and flowers.

The protein localises to the membrane. Its subcellular location is the nucleus. Its function is as follows. Transcriptional activator activated by proteolytic cleavage through regulated intramembrane proteolysis (RIP). Transcripition activator associated with the induction of genes related to flavonoid biosynthesis and required for the accumulation of anthocyanins in response to high light stress. Plays a role in the regulation of 20S and 26S proteasomes in response to high light stress. The protein is NAC domain-containing protein 78 (NAC078) of Arabidopsis thaliana (Mouse-ear cress).